Reading from the N-terminus, the 323-residue chain is Phospho-N-acetylmuramoyl-pentapeptide-transferase (323 aa).

9 helical membrane-spanning segments follow: residues 12-32 (IVMAIVISFIVASILGPIIIP), 58-78 (PTIGGLIFIFATIITMFVMVG), 84-104 (AMIALYSFVGFGFVGFLDDLL), 120-140 (MILLLIISGFLTWYAYKYIGT), 151-171 (INLGLFYIPAAMFYFAGVTNA), 177-197 (GLDGLATSVTVLVTTFLGIIS), 200-220 (LGHISLAIFCVALAGALLAFL), 229-250 (VFMGDTGSLALGGAVAMVALIL), and 303-323 (KIVSVFSIITVVFCFIAFASL).

The protein belongs to the glycosyltransferase 4 family. MraY subfamily. The cofactor is Mg(2+).

It localises to the cell membrane. The enzyme catalyses UDP-N-acetyl-alpha-D-muramoyl-L-alanyl-gamma-D-glutamyl-meso-2,6-diaminopimeloyl-D-alanyl-D-alanine + di-trans,octa-cis-undecaprenyl phosphate = di-trans,octa-cis-undecaprenyl diphospho-N-acetyl-alpha-D-muramoyl-L-alanyl-D-glutamyl-meso-2,6-diaminopimeloyl-D-alanyl-D-alanine + UMP. Its pathway is cell wall biogenesis; peptidoglycan biosynthesis. Its function is as follows. Catalyzes the initial step of the lipid cycle reactions in the biosynthesis of the cell wall peptidoglycan: transfers peptidoglycan precursor phospho-MurNAc-pentapeptide from UDP-MurNAc-pentapeptide onto the lipid carrier undecaprenyl phosphate, yielding undecaprenyl-pyrophosphoryl-MurNAc-pentapeptide, known as lipid I. This Clostridium perfringens (strain SM101 / Type A) protein is Phospho-N-acetylmuramoyl-pentapeptide-transferase.